A 158-amino-acid chain; its full sequence is Transcription elongation factor GreA (158 aa).

Residues 3–75 adopt a coiled-coil conformation; that stretch reads TEKTYPMTQE…TQLENMIRNA (73 aa).

This sequence belongs to the GreA/GreB family.

In terms of biological role, necessary for efficient RNA polymerase transcription elongation past template-encoded arresting sites. The arresting sites in DNA have the property of trapping a certain fraction of elongating RNA polymerases that pass through, resulting in locked ternary complexes. Cleavage of the nascent transcript by cleavage factors such as GreA or GreB allows the resumption of elongation from the new 3'terminus. GreA releases sequences of 2 to 3 nucleotides. In Bacillus cereus (strain ATCC 14579 / DSM 31 / CCUG 7414 / JCM 2152 / NBRC 15305 / NCIMB 9373 / NCTC 2599 / NRRL B-3711), this protein is Transcription elongation factor GreA.